A 255-amino-acid polypeptide reads, in one-letter code: tRNA (guanine-N(7)-)-methyltransferase (255 aa).

The disordered stretch occupies residues M1–V35. Over residues L13 to A23 the composition is skewed to basic residues. S-adenosyl-L-methionine-binding positions include G75, E98 to L99, N131 to S132, and L151. D154 is an active-site residue. T229 to E231 lines the S-adenosyl-L-methionine pocket.

This sequence belongs to the class I-like SAM-binding methyltransferase superfamily. TrmB family.

Its subcellular location is the nucleus. It carries out the reaction guanosine(46) in tRNA + S-adenosyl-L-methionine = N(7)-methylguanosine(46) in tRNA + S-adenosyl-L-homocysteine. It functions in the pathway tRNA modification; N(7)-methylguanine-tRNA biosynthesis. Catalyzes the formation of N(7)-methylguanine at position 46 (m7G46) in tRNA. The polypeptide is tRNA (guanine-N(7)-)-methyltransferase (Zea mays (Maize)).